The following is a 385-amino-acid chain: Prepilin peptidase EppA (385 aa).

10 helical membrane passes run 1 to 21 (MILMVIELLSVFIALLACFYA), 29 to 49 (GIIPNRLTFPVIGLGLLLNGA), 58 to 78 (WIFIYTAIFTAGIFALGYILW), 80 to 100 (MVAWAGGDVKLFTAVTSLLPF), 104 to 124 (LVSYSFLGTAFPVTASYPFPL), 126 to 146 (VIINSILALLPFLLVYVFFII), 166 to 186 (TSMVLALVITSAVTLTFLITD), 187 to 207 (FLPFQIIVLSLILVYLLTMVI), 231 to 251 (FELTVSGVVILWVSITVIQLI), and 358 to 378 (PAIFIGLLVSLLIGDLAMILF).

This sequence belongs to the peptidase A24 family.

It localises to the cell membrane. In terms of biological role, peptidase that processes the N-terminus of prepilins. This is Prepilin peptidase EppA from Methanothermobacter thermautotrophicus (strain ATCC 29096 / DSM 1053 / JCM 10044 / NBRC 100330 / Delta H) (Methanobacterium thermoautotrophicum).